Consider the following 193-residue polypeptide: Ribosomal RNA large subunit methyltransferase E (193 aa).

The S-adenosyl-L-methionine site is built by Gly49, Phe51, Asp69, Asp86, and Asp106. The Proton acceptor role is filled by Lys146.

It belongs to the class I-like SAM-binding methyltransferase superfamily. RNA methyltransferase RlmE family.

Its subcellular location is the cytoplasm. It catalyses the reaction uridine(2552) in 23S rRNA + S-adenosyl-L-methionine = 2'-O-methyluridine(2552) in 23S rRNA + S-adenosyl-L-homocysteine + H(+). In terms of biological role, specifically methylates the uridine in position 2552 of 23S rRNA at the 2'-O position of the ribose in the fully assembled 50S ribosomal subunit. This is Ribosomal RNA large subunit methyltransferase E from Brachyspira hyodysenteriae (strain ATCC 49526 / WA1).